The primary structure comprises 92 residues: Cell division topological specificity factor (92 aa).

Belongs to the MinE family.

In terms of biological role, prevents the cell division inhibition by proteins MinC and MinD at internal division sites while permitting inhibition at polar sites. This ensures cell division at the proper site by restricting the formation of a division septum at the midpoint of the long axis of the cell. The sequence is that of Cell division topological specificity factor from Syntrophobacter fumaroxidans (strain DSM 10017 / MPOB).